The primary structure comprises 440 residues: tRNA-2-methylthio-N(6)-dimethylallyladenosine synthase (440 aa).

An MTTase N-terminal domain is found at 2–117; that stretch reads KGLYIKTYGC…LPELIVKASR (116 aa). Residues Cys-11, Cys-47, Cys-80, Cys-157, Cys-161, and Cys-164 each contribute to the [4Fe-4S] cluster site. A Radical SAM core domain is found at 143-374; that stretch reads NSQGSSAFLA…QELISKQQLE (232 aa). The TRAM domain maps to 377–440; sequence QSMIGKTIPV…RQNSLLGCAA (64 aa).

Belongs to the methylthiotransferase family. MiaB subfamily. In terms of assembly, monomer. The cofactor is [4Fe-4S] cluster.

The protein localises to the cytoplasm. The catalysed reaction is N(6)-dimethylallyladenosine(37) in tRNA + (sulfur carrier)-SH + AH2 + 2 S-adenosyl-L-methionine = 2-methylsulfanyl-N(6)-dimethylallyladenosine(37) in tRNA + (sulfur carrier)-H + 5'-deoxyadenosine + L-methionine + A + S-adenosyl-L-homocysteine + 2 H(+). In terms of biological role, catalyzes the methylthiolation of N6-(dimethylallyl)adenosine (i(6)A), leading to the formation of 2-methylthio-N6-(dimethylallyl)adenosine (ms(2)i(6)A) at position 37 in tRNAs that read codons beginning with uridine. The polypeptide is tRNA-2-methylthio-N(6)-dimethylallyladenosine synthase (Wolbachia pipientis subsp. Culex pipiens (strain wPip)).